We begin with the raw amino-acid sequence, 672 residues long: MTHQQMLDLIQQLNDYSYAYHVKDEPIVPDAVYDRDYRQLQSIEAEHPEWIQADSPTQRVGEKPDSGFTNVAHTVPMLSLDNAFDNESLADFDQRIRKLLNAEQVTYCCEPKLDGLAISLRYEEGRLVRGVTRGDGLSGEDITSNIKTIYSVPLKLRTKTPPAVLEVRGEIYMPKEGFEKLNALAVEQGEKTFVNPRNAAAGSLRQLDPKVTAKRPLVMCAYSIGYVEGWEQPESHYAGLLQLSEWGFRTNDLMITAEGAQGCIDYYEKLNEKRASLSYDIDGIVYKVDQIALQNQLGFIARAPRWAIARKFPAQEEMTRILGVDFQVGRTGAITPVARLEPVFVGGVTVSNATLHNKDEIARLGVKVNDFVIVHRAGDVIPKVVQVVIDKRPENATEVVFPEACPVCGSDLEQVEGEAVIRCTGGLVCGAQLKESLKHFVSRKAMDIDGLGDKLIEQLVDQQLVKTPVDIFTLSEKKDTLLSMERMGQKSVEKLLASIEIAKSTQFNRFIYSLGIREVGEATARALTSYFTELDDLMAADQETLVEVEDVGPIVAQHVRLFFDQELNRDTIKGLLAAGVVWEKKQQVSADELPLSGKTYVVTGSLSQFSRDQVKDKLQALGAKVSGSVSAKTDCLVAGEKAGSKLTKAQSLNVPIIDEAGVIALLTEHGAI.

NAD(+)-binding positions include 30 to 34 (DAVYD), 79 to 80 (SL), and glutamate 110. Lysine 112 serves as the catalytic N6-AMP-lysine intermediate. NAD(+) is bound by residues arginine 133, glutamate 170, lysine 287, and lysine 311. Cysteine 405, cysteine 408, cysteine 423, and cysteine 429 together coordinate Zn(2+). In terms of domain architecture, BRCT spans 590-672 (ADELPLSGKT…IALLTEHGAI (83 aa)).

Belongs to the NAD-dependent DNA ligase family. LigA subfamily. Mg(2+) serves as cofactor. Requires Mn(2+) as cofactor.

The enzyme catalyses NAD(+) + (deoxyribonucleotide)n-3'-hydroxyl + 5'-phospho-(deoxyribonucleotide)m = (deoxyribonucleotide)n+m + AMP + beta-nicotinamide D-nucleotide.. Functionally, DNA ligase that catalyzes the formation of phosphodiester linkages between 5'-phosphoryl and 3'-hydroxyl groups in double-stranded DNA using NAD as a coenzyme and as the energy source for the reaction. It is essential for DNA replication and repair of damaged DNA. This chain is DNA ligase, found in Marinomonas sp. (strain MWYL1).